Reading from the N-terminus, the 101-residue chain is MAKKSMKNRELKRQLTVAKFAKKRAELKATIVNVNASPEERFAAVVALQKQPRDASAARLRNRCRLTGRPHGVYRKFGLGRNMLRQAAMRGDVPGLVKASW.

This sequence belongs to the universal ribosomal protein uS14 family. Part of the 30S ribosomal subunit. Contacts proteins S3 and S10.

Its function is as follows. Binds 16S rRNA, required for the assembly of 30S particles and may also be responsible for determining the conformation of the 16S rRNA at the A site. The protein is Small ribosomal subunit protein uS14 of Pseudomonas putida (strain GB-1).